The following is a 239-amino-acid chain: ATP-dependent dethiobiotin synthetase BioD (239 aa).

An ATP-binding site is contributed by 15–20; that stretch reads EIGKTF. Residue Thr19 participates in Mg(2+) binding. Residue Lys40 is part of the active site. Residues Asp57, 118 to 121, and 178 to 179 contribute to the ATP site; these read EGVG and NH. Mg(2+)-binding residues include Asp57 and Glu118.

It belongs to the dethiobiotin synthetase family. Homodimer. The cofactor is Mg(2+).

It localises to the cytoplasm. It catalyses the reaction (7R,8S)-7,8-diammoniononanoate + CO2 + ATP = (4R,5S)-dethiobiotin + ADP + phosphate + 3 H(+). The protein operates within cofactor biosynthesis; biotin biosynthesis; biotin from 7,8-diaminononanoate: step 1/2. Functionally, catalyzes a mechanistically unusual reaction, the ATP-dependent insertion of CO2 between the N7 and N8 nitrogen atoms of 7,8-diaminopelargonic acid (DAPA, also called 7,8-diammoniononanoate) to form a ureido ring. This is ATP-dependent dethiobiotin synthetase BioD from Burkholderia cenocepacia (strain ATCC BAA-245 / DSM 16553 / LMG 16656 / NCTC 13227 / J2315 / CF5610) (Burkholderia cepacia (strain J2315)).